Consider the following 162-residue polypeptide: UPF0260 protein CC_3276 (162 aa).

It belongs to the UPF0260 family.

The polypeptide is UPF0260 protein CC_3276 (Caulobacter vibrioides (strain ATCC 19089 / CIP 103742 / CB 15) (Caulobacter crescentus)).